We begin with the raw amino-acid sequence, 573 residues long: Mucin-13 (573 aa).

The N-terminal stretch at 1–17 (MKGFLLLSLSLLLVTVG) is a signal peptide. Low complexity predominate over residues 16 to 234 (VGSSSQASST…VPSGGSTGPS (219 aa)). Positions 16-237 (VGSSSQASST…GGSTGPSDLC (222 aa)) are disordered. Over 18-480 (SSSQASSTTS…FGYSGMNCKD (463 aa)) the chain is Extracellular. One can recognise an EGF-like 1 domain in the interval 233 to 273 (PSDLCNPNPCKGTASCVKLHSKHFCLCLEGYYYNSSLSSCV). 3 cysteine pairs are disulfide-bonded: C237/C248, C242/C257, and C259/C272. N-linked (GlcNAc...) asparagine glycosylation is found at N266, N316, and N397. An SEA domain is found at 274–391 (KGTTFPGDIS…DYVSINLCDH (118 aa)). EGF-like domains are found at residues 385–425 (SINL…PFCV) and 425–467 (VAVT…RKCE). Cystine bridges form between C389–C402, C394–C408, C410–C424, C429–C441, C433–C451, and C453–C466. Residues 481–508 (QFQLILTIVGTIAGALILILLIAFIVSA) traverse the membrane as a helical segment. At 509–573 (RSKNKKKDGE…NQRSMPRPDY (65 aa)) the chain is on the cytoplasmic side. Residues 548–573 (PKVRTGVPSQTPNPYANQRSMPRPDY) form a disordered region. Polar residues predominate over residues 554–567 (VPSQTPNPYANQRS).

In terms of assembly, homodimer of beta subunits. In terms of processing, cleaved into two subunits, alpha and beta, probably between the first EGF domain and the SEA domain. Beta subunit contains the cytoplasmic tail and alpha subunit the extracellular tail. The homooligomerization into dimers is dependent on intrachain disulfide bonds. Highly N-glycosylated.

The protein localises to the cell membrane. It is found in the secreted. Its function is as follows. Epithelial and hemopoietic transmembrane mucin that may play a role in cell signaling. The polypeptide is Mucin-13 (Muc13) (Mus musculus (Mouse)).